We begin with the raw amino-acid sequence, 401 residues long: Imidazolonepropionase (401 aa).

Fe(3+) is bound by residues His-66 and His-68. 2 residues coordinate Zn(2+): His-66 and His-68. Residues Arg-75, Tyr-138, and His-171 each coordinate 4-imidazolone-5-propanoate. Position 138 (Tyr-138) interacts with N-formimidoyl-L-glutamate. Position 236 (His-236) interacts with Fe(3+). His-236 is a Zn(2+) binding site. Position 239 (Gln-239) interacts with 4-imidazolone-5-propanoate. Asp-311 is a binding site for Fe(3+). Asp-311 serves as a coordination point for Zn(2+). Positions 313 and 315 each coordinate N-formimidoyl-L-glutamate. Thr-316 contributes to the 4-imidazolone-5-propanoate binding site.

Belongs to the metallo-dependent hydrolases superfamily. HutI family. The cofactor is Zn(2+). Requires Fe(3+) as cofactor.

It is found in the cytoplasm. It catalyses the reaction 4-imidazolone-5-propanoate + H2O = N-formimidoyl-L-glutamate. It participates in amino-acid degradation; L-histidine degradation into L-glutamate; N-formimidoyl-L-glutamate from L-histidine: step 3/3. Catalyzes the hydrolytic cleavage of the carbon-nitrogen bond in imidazolone-5-propanoate to yield N-formimidoyl-L-glutamate. It is the third step in the universal histidine degradation pathway. The sequence is that of Imidazolonepropionase from Acinetobacter baumannii (strain ACICU).